The sequence spans 148 residues: Holo-[acyl-carrier-protein] synthase (148 aa).

2 residues coordinate Mg(2+): aspartate 9 and glutamate 63.

The protein belongs to the P-Pant transferase superfamily. AcpS family. Mg(2+) is required as a cofactor.

Its subcellular location is the cytoplasm. The catalysed reaction is apo-[ACP] + CoA = holo-[ACP] + adenosine 3',5'-bisphosphate + H(+). Its function is as follows. Transfers the 4'-phosphopantetheine moiety from coenzyme A to a Ser of acyl-carrier-protein. The chain is Holo-[acyl-carrier-protein] synthase from Burkholderia cenocepacia (strain HI2424).